A 254-amino-acid chain; its full sequence is 3-deoxy-manno-octulosonate cytidylyltransferase (254 aa).

The protein belongs to the KdsB family.

Its subcellular location is the cytoplasm. The enzyme catalyses 3-deoxy-alpha-D-manno-oct-2-ulosonate + CTP = CMP-3-deoxy-beta-D-manno-octulosonate + diphosphate. It participates in nucleotide-sugar biosynthesis; CMP-3-deoxy-D-manno-octulosonate biosynthesis; CMP-3-deoxy-D-manno-octulosonate from 3-deoxy-D-manno-octulosonate and CTP: step 1/1. It functions in the pathway bacterial outer membrane biogenesis; lipopolysaccharide biosynthesis. In terms of biological role, activates KDO (a required 8-carbon sugar) for incorporation into bacterial lipopolysaccharide in Gram-negative bacteria. This is 3-deoxy-manno-octulosonate cytidylyltransferase from Haemophilus influenzae (strain ATCC 51907 / DSM 11121 / KW20 / Rd).